A 197-amino-acid polypeptide reads, in one-letter code: Endonuclease V (197 aa).

Residues Asp37 and Glu101 each coordinate Mg(2+).

The protein belongs to the endonuclease V family. Mg(2+) serves as cofactor.

It is found in the cytoplasm. It catalyses the reaction Endonucleolytic cleavage at apurinic or apyrimidinic sites to products with a 5'-phosphate.. DNA repair enzyme involved in the repair of deaminated bases. Selectively cleaves double-stranded DNA at the second phosphodiester bond 3' to a deoxyinosine leaving behind the intact lesion on the nicked DNA. This is Endonuclease V from Thermococcus kodakarensis (strain ATCC BAA-918 / JCM 12380 / KOD1) (Pyrococcus kodakaraensis (strain KOD1)).